We begin with the raw amino-acid sequence, 158 residues long: UPF0336 protein Mb0654 (158 aa).

It belongs to the UPF0336 family.

The chain is UPF0336 protein Mb0654 from Mycobacterium bovis (strain ATCC BAA-935 / AF2122/97).